The following is a 220-amino-acid chain: MRLILLGAPGAGKGTQANFIKEKFGIPQISTGDMLRAAVKAGTPLGVEAKTYMDEGKLVPDSLIIGLVKERLKEADCANGYLFDGFPRTIAQADAMKEAGVAIDYVLEIDVPFSEIIERMSGRRTHPASGRTYHVKFNPPKVEGKDDVTGEPLVQRDDDKEETVKKRLDVYEAQTKPLITYYGDWARRGAENGLKAPAYRKISGLGAVEEIRARVFDALK.

Position 10 to 15 (10 to 15 (GAGKGT)) interacts with ATP. An NMP region spans residues 30–59 (STGDMLRAAVKAGTPLGVEAKTYMDEGKLV). AMP is bound by residues Thr-31, Arg-36, 57–59 (KLV), 85–88 (GFPR), and Gln-92. Residues 122 to 159 (GRRTHPASGRTYHVKFNPPKVEGKDDVTGEPLVQRDDD) form an LID region. Residues Arg-123 and 132–133 (TY) contribute to the ATP site. Arg-156 and Arg-167 together coordinate AMP. Residue Gly-206 participates in ATP binding.

It belongs to the adenylate kinase family. Monomer.

Its subcellular location is the cytoplasm. The catalysed reaction is AMP + ATP = 2 ADP. The protein operates within purine metabolism; AMP biosynthesis via salvage pathway; AMP from ADP: step 1/1. In terms of biological role, catalyzes the reversible transfer of the terminal phosphate group between ATP and AMP. Plays an important role in cellular energy homeostasis and in adenine nucleotide metabolism. The protein is Adenylate kinase of Burkholderia mallei (strain NCTC 10247).